The primary structure comprises 471 residues: Ammonium transporter Rh type B (471 aa).

The Cytoplasmic segment spans residues 1–13; the sequence is MAGSPSRAAGRRL. A helical membrane pass occupies residues 14–33; the sequence is QLPLLSFLQGATAVLFAVFV. Residues 34–60 are Extracellular-facing; sequence RYNHKTDAALWHRGNHSNADNEFYFRY. Asn-48 is a glycosylation site (N-linked (GlcNAc...) asparagine). Residues 61-81 traverse the membrane as a helical segment; that stretch reads PSFQDVHAMVFVGFGFLMVFL. Over 82-85 the chain is Cytoplasmic; that stretch reads QRYG. The chain crosses the membrane as a helical span at residues 86-106; the sequence is FSSVGFTFLLAAFALQWSTLV. Topologically, residues 107 to 123 are extracellular; it reads QGFLHSFHGGHIHVGVE. The helical transmembrane segment at 124–144 threads the bilayer; sequence SMINADFCAGAVLISFGAVLG. The Cytoplasmic segment spans residues 145–148; sequence KTGP. A helical transmembrane segment spans residues 149–169; sequence AQLLLMALLEVVLFGINEFVL. The Extracellular segment spans residues 170 to 177; sequence LHLLGVRD. A helical membrane pass occupies residues 178–200; sequence AGGSMTIHTFGAYFGLVLSQVLY. Residues 201–217 lie on the Cytoplasmic side of the membrane; it reads RPQLEKSKHRQGLYHSD. Residues 218-238 form a helical membrane-spanning segment; sequence LFAMIGTIFLWIFWPSFNAAL. At 239 to 249 the chain is on the extracellular side; that stretch reads TSLGAGQHRTA. A helical membrane pass occupies residues 250-270; that stretch reads LNTYYSLAASTLGTFALSALV. Residues 271-280 are Cytoplasmic-facing; that stretch reads GEDGRLDMVH. Residues 281–301 traverse the membrane as a helical segment; sequence IQNAALAGRVVVGTSSEMMLT. A topological domain (extracellular) is located at residue Pro-302. A helical membrane pass occupies residues 303–323; it reads FGALAAGFLAGTVSTLGYKFF. Over 324 to 344 the chain is Cytoplasmic; the sequence is TPILESKFKVQDTCGVHNLHG. The helical transmembrane segment at 345-365 threads the bilayer; that stretch reads MPGVLGVLLGVLVAGLATHEA. Topologically, residues 366–391 are extracellular; it reads YGDGLESVFPLIAEGQRSATSQAMYQ. A helical membrane pass occupies residues 392 to 412; the sequence is LFGLFVTLMFASVGGGLGGLL. Over 413–471 the chain is Cytoplasmic; the sequence is LKLPFLDSPPDSQCYEDQVHWQAPGATLSPLPTPAFQVPGEHEDKAQRPLRVEEADTQA. The tract at residues 414-422 is interaction with ANK3; that stretch reads KLPFLDSPP. A Basolateral sorting signal motif is present at residues 427-430; it reads YEDQ. Residues 437–471 form a disordered region; that stretch reads GATLSPLPTPAFQVPGEHEDKAQRPLRVEEADTQA. The span at 452–471 shows a compositional bias: basic and acidic residues; that stretch reads GEHEDKAQRPLRVEEADTQA.

It belongs to the ammonium transporter (TC 2.A.49) family. Rh subfamily. As to quaternary structure, interacts (via C-terminus) with ANK2 and ANK3; required for targeting to the basolateral membrane. N-glycosylated.

The protein resides in the cell membrane. It is found in the basolateral cell membrane. The enzyme catalyses NH4(+)(in) = NH4(+)(out). It catalyses the reaction methylamine(out) = methylamine(in). The catalysed reaction is CO2(out) = CO2(in). In terms of biological role, ammonium transporter involved in the maintenance of acid-base homeostasis. Transports ammonium and its related derivative methylammonium across the basolateral plasma membrane of epithelial cells likely contributing to renal transepithelial ammonia transport and ammonia metabolism. May transport either NH4(+) or NH3 ammonia species predominantly mediating an electrogenic NH4(+) transport. May act as a CO2 channel providing for renal acid secretion. The protein is Ammonium transporter Rh type B (RHBG) of Pongo pygmaeus (Bornean orangutan).